A 564-amino-acid polypeptide reads, in one-letter code: Eukaryotic translation initiation factor 3 subunit L (564 aa).

The region spanning 331-537 (DAIRVFANIL…IHIADTKVAR (207 aa)) is the PCI domain.

Belongs to the eIF-3 subunit L family. As to quaternary structure, component of the eukaryotic translation initiation factor 3 (eIF-3) complex, which is composed of 13 subunits: EIF3A, EIF3B, EIF3C, EIF3D, EIF3E, EIF3F, EIF3G, EIF3H, EIF3I, EIF3J, EIF3K, EIF3L and EIF3M.

It is found in the cytoplasm. Its function is as follows. Component of the eukaryotic translation initiation factor 3 (eIF-3) complex, which is involved in protein synthesis of a specialized repertoire of mRNAs and, together with other initiation factors, stimulates binding of mRNA and methionyl-tRNAi to the 40S ribosome. The eIF-3 complex specifically targets and initiates translation of a subset of mRNAs involved in cell proliferation. The chain is Eukaryotic translation initiation factor 3 subunit L from Gallus gallus (Chicken).